Here is a 367-residue protein sequence, read N- to C-terminus: Heme A synthase (367 aa).

5 consecutive transmembrane segments (helical) span residues 25–45 (ALRLWLGFVLLALFCLVLVGG), 111–131 (LIARGIGVIFALPLIFFWLTG), 139–159 (WPLVGILALGGLQGFIGWWMV), 174–194 (LATHLVMACLIFAGCMWIMRG), and 210–230 (GFAAAIAIFALFQIYLGALVA). H274 provides a ligand contact to heme. A run of 3 helical transmembrane segments spans residues 276 to 296 (IGAYTLFALTLINMVIALRAA), 305 to 325 (AVVLFSLVTLQAAIGIATLLM), and 327 to 347 (VPLHWGLLHQAGALVVFGFAV). H335 contributes to the heme binding site.

This sequence belongs to the COX15/CtaA family. Type 2 subfamily. As to quaternary structure, interacts with CtaB. It depends on heme b as a cofactor.

Its subcellular location is the cell membrane. The catalysed reaction is Fe(II)-heme o + 2 A + H2O = Fe(II)-heme a + 2 AH2. It functions in the pathway porphyrin-containing compound metabolism; heme A biosynthesis; heme A from heme O: step 1/1. Functionally, catalyzes the conversion of heme O to heme A by two successive hydroxylations of the methyl group at C8. The first hydroxylation forms heme I, the second hydroxylation results in an unstable dihydroxymethyl group, which spontaneously dehydrates, resulting in the formyl group of heme A. This is Heme A synthase from Rhizobium etli (strain CIAT 652).